The following is a 411-amino-acid chain: Adenylosuccinate synthetase (411 aa).

Residues 11 to 17 (GDEGKGK) and 39 to 41 (GHT) contribute to the GTP site. Asp12 (proton acceptor) is an active-site residue. Mg(2+) contacts are provided by Asp12 and Gly39. IMP is bound by residues 12–15 (DEGK), 37–40 (NAGH), Thr121, Arg135, Gln215, Thr230, and Arg294. The active-site Proton donor is the His40. 290–296 (TTTKRPR) provides a ligand contact to substrate. GTP contacts are provided by residues Arg296, 322-324 (KLD), and 400-402 (STS).

The protein belongs to the adenylosuccinate synthetase family. In terms of assembly, homodimer. It depends on Mg(2+) as a cofactor.

The protein localises to the cytoplasm. It carries out the reaction IMP + L-aspartate + GTP = N(6)-(1,2-dicarboxyethyl)-AMP + GDP + phosphate + 2 H(+). Its pathway is purine metabolism; AMP biosynthesis via de novo pathway; AMP from IMP: step 1/2. In terms of biological role, plays an important role in the de novo pathway of purine nucleotide biosynthesis. Catalyzes the first committed step in the biosynthesis of AMP from IMP. The chain is Adenylosuccinate synthetase from Helicobacter pylori (strain HPAG1).